Here is a 376-residue protein sequence, read N- to C-terminus: Chaperone protein DnaJ (376 aa).

The J domain maps to 5-70 (DYYEVLGVGR…DKKAAYDQFG (66 aa)). The CR-type zinc finger occupies 132–210 (GLTKELKVPT…CHGNGRVEKT (79 aa)). Zn(2+) contacts are provided by C145, C148, C162, C165, C184, C187, C198, and C201. CXXCXGXG motif repeat units lie at residues 145–152 (CDSCDGSG), 162–169 (CGTCHGMG), 184–191 (CPTCHGRG), and 198–205 (CSKCHGNG).

This sequence belongs to the DnaJ family. As to quaternary structure, homodimer. It depends on Zn(2+) as a cofactor.

The protein localises to the cytoplasm. Participates actively in the response to hyperosmotic and heat shock by preventing the aggregation of stress-denatured proteins and by disaggregating proteins, also in an autonomous, DnaK-independent fashion. Unfolded proteins bind initially to DnaJ; upon interaction with the DnaJ-bound protein, DnaK hydrolyzes its bound ATP, resulting in the formation of a stable complex. GrpE releases ADP from DnaK; ATP binding to DnaK triggers the release of the substrate protein, thus completing the reaction cycle. Several rounds of ATP-dependent interactions between DnaJ, DnaK and GrpE are required for fully efficient folding. Also involved, together with DnaK and GrpE, in the DNA replication of plasmids through activation of initiation proteins. In Shewanella amazonensis (strain ATCC BAA-1098 / SB2B), this protein is Chaperone protein DnaJ.